Here is a 173-residue protein sequence, read N- to C-terminus: NADH-ubiquinone oxidoreductase chain 6 (173 aa).

The next 5 helical transmembrane spans lie at 1-21, 27-47, 48-68, 87-107, and 139-159; these read MTYF…AVAS, YGVV…LSLG, ISFV…VVFV, VIGY…IGGF, and CGVG…FVVL.

This sequence belongs to the complex I subunit 6 family.

The protein resides in the mitochondrion membrane. The catalysed reaction is a ubiquinone + NADH + 5 H(+)(in) = a ubiquinol + NAD(+) + 4 H(+)(out). Its function is as follows. Core subunit of the mitochondrial membrane respiratory chain NADH dehydrogenase (Complex I) that is believed to belong to the minimal assembly required for catalysis. Complex I functions in the transfer of electrons from NADH to the respiratory chain. The immediate electron acceptor for the enzyme is believed to be ubiquinone. This Alca torda (Razorbill) protein is NADH-ubiquinone oxidoreductase chain 6 (MT-ND6).